Reading from the N-terminus, the 302-residue chain is FeMo cofactor biosynthesis protein NifB (302 aa).

The Radical SAM core domain maps to 22-264; it reads HDKYGRVHLP…PQFRACGQCR (243 aa). 3 residues coordinate [4Fe-4S] cluster: Cys36, Cys40, and Cys43. 3 residues coordinate S-adenosyl-L-methionine: Gly91, Thr142, and Ile194. [4Fe-4S] cluster contacts are provided by Cys260 and Cys263.

This sequence belongs to the radical SAM superfamily. NifB family. Monomer. Requires [4Fe-4S] cluster as cofactor.

Its pathway is cofactor biosynthesis; Fe-Mo cofactor biosynthesis. In terms of biological role, involved in the biosynthesis of the iron-molybdenum cofactor (FeMo-co or M-cluster) found in the dinitrogenase enzyme of the nitrogenase complex in nitrogen-fixing microorganisms. NifB catalyzes the crucial step of radical SAM-dependent carbide insertion that occurs concomitant with the insertion of a 9th sulfur and the rearrangement/coupling of two [4Fe-4S] clusters into a [8Fe-9S-C] cluster, the precursor to the M-cluster. This is FeMo cofactor biosynthesis protein NifB from Methanocaldococcus infernus (strain DSM 11812 / JCM 15783 / ME).